A 130-amino-acid chain; its full sequence is Small ribosomal subunit protein uS9 (130 aa).

The interval 98 to 130 (LKRAGLLTRDPRMKERKKPGLKKARRSPQFSKR) is disordered. The span at 111–130 (KERKKPGLKKARRSPQFSKR) shows a compositional bias: basic residues.

The protein belongs to the universal ribosomal protein uS9 family.

The protein is Small ribosomal subunit protein uS9 of Staphylococcus saprophyticus subsp. saprophyticus (strain ATCC 15305 / DSM 20229 / NCIMB 8711 / NCTC 7292 / S-41).